The primary structure comprises 124 residues: Fluoride-specific ion channel FluC (124 aa).

Transmembrane regions (helical) follow at residues 4-24 (IVAI…LAGW), 32-52 (GFPY…GLIM), 67-87 (IGLT…SYET), and 96-116 (FITA…CTWL). The Na(+) site is built by Gly-75 and Thr-78.

It belongs to the fluoride channel Fluc/FEX (TC 1.A.43) family.

The protein resides in the cell inner membrane. It carries out the reaction fluoride(in) = fluoride(out). Its activity is regulated as follows. Na(+) is not transported, but it plays an essential structural role and its presence is essential for fluoride channel function. In terms of biological role, fluoride-specific ion channel. Important for reducing fluoride concentration in the cell, thus reducing its toxicity. This chain is Fluoride-specific ion channel FluC, found in Geobacter metallireducens (strain ATCC 53774 / DSM 7210 / GS-15).